A 256-amino-acid chain; its full sequence is uncharacterized protein (256 aa).

2 helical membrane-spanning segments follow: residues 181-201 and 231-251; these read CCII…ASMV and GIAV…GLIA.

The protein resides in the cell membrane. This is an uncharacterized protein from Methanocaldococcus jannaschii (strain ATCC 43067 / DSM 2661 / JAL-1 / JCM 10045 / NBRC 100440) (Methanococcus jannaschii).